Reading from the N-terminus, the 89-residue chain is Small ribosomal subunit protein uS15 (89 aa).

It belongs to the universal ribosomal protein uS15 family. As to quaternary structure, part of the 30S ribosomal subunit. Forms a bridge to the 50S subunit in the 70S ribosome, contacting the 23S rRNA.

Its function is as follows. One of the primary rRNA binding proteins, it binds directly to 16S rRNA where it helps nucleate assembly of the platform of the 30S subunit by binding and bridging several RNA helices of the 16S rRNA. In terms of biological role, forms an intersubunit bridge (bridge B4) with the 23S rRNA of the 50S subunit in the ribosome. This Mycolicibacterium vanbaalenii (strain DSM 7251 / JCM 13017 / BCRC 16820 / KCTC 9966 / NRRL B-24157 / PYR-1) (Mycobacterium vanbaalenii) protein is Small ribosomal subunit protein uS15.